The chain runs to 181 residues: Oligoribonuclease (181 aa).

The region spanning 8 to 171 (LIWVDLEMTG…EDIKESIAEM (164 aa)) is the Exonuclease domain. Tyr-129 is a catalytic residue.

The protein belongs to the oligoribonuclease family.

The protein resides in the cytoplasm. Its function is as follows. 3'-to-5' exoribonuclease specific for small oligoribonucleotides. In Shewanella frigidimarina (strain NCIMB 400), this protein is Oligoribonuclease.